An 862-amino-acid chain; its full sequence is DNA mismatch repair protein MutS (862 aa).

608–615 serves as a coordination point for ATP; that stretch reads GPNMAGKS.

This sequence belongs to the DNA mismatch repair MutS family.

This protein is involved in the repair of mismatches in DNA. It is possible that it carries out the mismatch recognition step. This protein has a weak ATPase activity. The polypeptide is DNA mismatch repair protein MutS (Borrelia garinii subsp. bavariensis (strain ATCC BAA-2496 / DSM 23469 / PBi) (Borreliella bavariensis)).